The sequence spans 399 residues: Type II secretion system protein L (399 aa).

Residues 1 to 247 (MSKAENTSGK…VKPWKQALLP (247 aa)) are Cytoplasmic-facing. Residues 248–264 (WRNVLIALSAWLLLVLG) traverse the membrane as a helical segment. At 265-399 (ESVWTHYQWY…EGQLTLRSQP (135 aa)) the chain is on the periplasmic side.

It belongs to the GSP L family. Type II secretion system is composed of four main components: the outer membrane complex, the inner membrane complex, the cytoplasmic secretion ATPase and the periplasm-spanning pseudopilus. Forms homodimers. Interacts with OutM/GspM. Interacts with OutE/GspE and OutF/GspF.

The protein localises to the cell inner membrane. In terms of biological role, inner membrane component of the type II secretion system required for the energy-dependent secretion of extracellular factors such as proteases and toxins from the periplasm. Plays a role in the complex assembly and recruits OutM resulting in a stable complex in the inner membrane. Provides thus a link between the energy-providing OutE protein in the cytoplasm and the rest of the T2SS machinery. In Dickeya chrysanthemi (Pectobacterium chrysanthemi), this protein is Type II secretion system protein L (outL).